Consider the following 408-residue polypeptide: 3-ketoacyl-CoA thiolase B, peroxisomal (408 aa).

The active-site Acyl-thioester intermediate is cysteine 112. Residues histidine 366 and cysteine 394 each act as proton acceptor in the active site.

The protein belongs to the thiolase-like superfamily. Thiolase family. In terms of assembly, homodimer.

The protein localises to the peroxisome. The catalysed reaction is an acyl-CoA + acetyl-CoA = a 3-oxoacyl-CoA + CoA. It functions in the pathway lipid metabolism; fatty acid metabolism. The protein is 3-ketoacyl-CoA thiolase B, peroxisomal of Candida tropicalis (Yeast).